A 301-amino-acid chain; its full sequence is Pantothenate synthetase (301 aa).

Residue 30–37 coordinates ATP; sequence MGNLHEGH. The Proton donor role is filled by H37. Q61 lines the (R)-pantoate pocket. Q61 contributes to the beta-alanine binding site. 149-152 contributes to the ATP binding site; sequence GEKD. Q155 is a (R)-pantoate binding site. ATP is bound by residues V178 and 186–189; that span reads MSSR.

Belongs to the pantothenate synthetase family. Homodimer.

Its subcellular location is the cytoplasm. The enzyme catalyses (R)-pantoate + beta-alanine + ATP = (R)-pantothenate + AMP + diphosphate + H(+). Its pathway is cofactor biosynthesis; (R)-pantothenate biosynthesis; (R)-pantothenate from (R)-pantoate and beta-alanine: step 1/1. Its function is as follows. Catalyzes the condensation of pantoate with beta-alanine in an ATP-dependent reaction via a pantoyl-adenylate intermediate. This chain is Pantothenate synthetase, found in Vibrio parahaemolyticus serotype O3:K6 (strain RIMD 2210633).